Consider the following 243-residue polypeptide: UPF0502 protein RALTA_B0914 (243 aa).

Over residues 1–10 (MPSTPESDPT) the composition is skewed to polar residues. The tract at residues 1–23 (MPSTPESDPTQPGDRPARPALRP) is disordered.

The protein belongs to the UPF0502 family.

This Cupriavidus taiwanensis (strain DSM 17343 / BCRC 17206 / CCUG 44338 / CIP 107171 / LMG 19424 / R1) (Ralstonia taiwanensis (strain LMG 19424)) protein is UPF0502 protein RALTA_B0914.